We begin with the raw amino-acid sequence, 124 residues long: Putative membrane protein insertion efficiency factor (124 aa).

This sequence belongs to the UPF0161 family.

The protein resides in the cell inner membrane. Could be involved in insertion of integral membrane proteins into the membrane. The sequence is that of Putative membrane protein insertion efficiency factor from Psychrobacter cryohalolentis (strain ATCC BAA-1226 / DSM 17306 / VKM B-2378 / K5).